The chain runs to 126 residues: Fluoride-specific ion channel FluC (126 aa).

Transmembrane regions (helical) follow at residues 35-55 (WWTL…IGLL), 71-91 (VGML…WLLF), and 101-121 (LYVV…MILI). Na(+)-binding residues include Gly-75 and Thr-78.

This sequence belongs to the fluoride channel Fluc/FEX (TC 1.A.43) family.

The protein resides in the cell inner membrane. The catalysed reaction is fluoride(in) = fluoride(out). Its activity is regulated as follows. Na(+) is not transported, but it plays an essential structural role and its presence is essential for fluoride channel function. In terms of biological role, fluoride-specific ion channel. Important for reducing fluoride concentration in the cell, thus reducing its toxicity. This Sphingopyxis alaskensis (strain DSM 13593 / LMG 18877 / RB2256) (Sphingomonas alaskensis) protein is Fluoride-specific ion channel FluC.